A 375-amino-acid chain; its full sequence is 23S rRNA (uracil(747)-C(5))-methyltransferase RlmC (375 aa).

Residues Cys3, Cys11, Cys14, and Cys87 each coordinate [4Fe-4S] cluster. Residues Gln212, Phe241, Glu262, and Asn307 each coordinate S-adenosyl-L-methionine. Cys334 acts as the Nucleophile in catalysis.

This sequence belongs to the class I-like SAM-binding methyltransferase superfamily. RNA M5U methyltransferase family. RlmC subfamily.

The enzyme catalyses uridine(747) in 23S rRNA + S-adenosyl-L-methionine = 5-methyluridine(747) in 23S rRNA + S-adenosyl-L-homocysteine + H(+). Functionally, catalyzes the formation of 5-methyl-uridine at position 747 (m5U747) in 23S rRNA. The sequence is that of 23S rRNA (uracil(747)-C(5))-methyltransferase RlmC from Enterobacter sp. (strain 638).